Reading from the N-terminus, the 199-residue chain is GTP-binding protein Di-Ras2 (199 aa).

Residues 14-21 (GAGGVGKS), 33-39 (RESYIPT), 61-65 (DTTGS), and 121-124 (NKCD) contribute to the GTP site. A Phosphoserine modification is found at serine 35. The Effector region signature appears at 36 to 44 (YIPTVEDTY). Residue serine 126 is modified to Phosphoserine. 152 to 153 (AK) provides a ligand contact to GTP. A Cysteine methyl ester modification is found at cysteine 196. Cysteine 196 carries the S-geranylgeranyl cysteine lipid modification. Residues 197-199 (VVM) constitute a propeptide, removed in mature form.

It belongs to the small GTPase superfamily. Di-Ras family. Post-translationally, ubiquitinated by the ECS(ASB11) complex via 'Lys-11'-linked ubiquitin chains, leading to its degradation by the proteasome.

The protein localises to the cell membrane. It carries out the reaction GTP + H2O = GDP + phosphate + H(+). Its function is as follows. Displays low GTPase activity and exists predominantly in the GTP-bound form. This chain is GTP-binding protein Di-Ras2 (Diras2), found in Mus musculus (Mouse).